We begin with the raw amino-acid sequence, 355 residues long: Proto-oncogene Wnt-3 (355 aa).

An N-terminal signal peptide occupies residues 1–21; sequence MEPHLLGLLLGLLLSGTRVLA. 11 disulfides stabilise this stretch: Cys-80–Cys-91, Cys-131–Cys-139, Cys-141–Cys-158, Cys-206–Cys-220, Cys-208–Cys-215, Cys-284–Cys-315, Cys-300–Cys-310, Cys-314–Cys-354, Cys-330–Cys-345, Cys-332–Cys-342, and Cys-337–Cys-338. An N-linked (GlcNAc...) asparagine glycan is attached at Asn-90. Ser-212 carries the O-palmitoleoyl serine; by PORCN lipid modification. The N-linked (GlcNAc...) asparagine glycan is linked to Asn-301.

It belongs to the Wnt family. In terms of assembly, forms a soluble 1:1 complex with AFM; this prevents oligomerization and is required for prolonged biological activity. The complex with AFM may represent the physiological form in body fluids. Interacts with PORCN. Interacts with WLS. Post-translationally, palmitoleoylation is required for efficient binding to frizzled receptors. Depalmitoleoylation leads to Wnt signaling pathway inhibition. In terms of tissue distribution, detected at low levels in adult brain. Dorsal portion of the neural tube, dorsal ectoderm, the branchial arches, and the limb buds.

The protein resides in the secreted. The protein localises to the extracellular space. It localises to the extracellular matrix. Ligand for members of the frizzled family of seven transmembrane receptors. Functions in the canonical Wnt signaling pathway that results in activation of transcription factors of the TCF/LEF family. Required for normal gastrulation, formation of the primitive streak, and for the formation of the mesoderm during early embryogenesis. Required for normal formation of the apical ectodermal ridge and for normal embryonic limb development. This Mus musculus (Mouse) protein is Proto-oncogene Wnt-3 (Wnt3).